Here is a 280-residue protein sequence, read N- to C-terminus: MQLVIVTGLSGSGKSIVLKMLEDSGYYCIDNLPATLLPQASEHLSQGNHQRVAISIDTRSASLEALPGNIRKLKDEGIEVQVLFLEANVETLVKRYSETRRRHPLSSDTSTLAESISHERHMLEPLVDLGLRIDTSSLSANALRNWVKEFVTQKNGELILLFSSFGFKHGIPLDADYVFDVRCLPNPYYDPALRPQTGQDKPVCAFLEAHDSVQNMYDDIRGFIERWLPNFIADNRSYLTVAIGCTGGQHRSVYLAERLAAHFRRQEYRVLVRHRSLETN.

8–15 contacts ATP; the sequence is GLSGSGKS. GTP is bound at residue 57 to 60; the sequence is DTRS.

It belongs to the RapZ-like family.

Displays ATPase and GTPase activities. In Methylobacillus flagellatus (strain ATCC 51484 / DSM 6875 / VKM B-1610 / KT), this protein is Nucleotide-binding protein Mfla_0145.